We begin with the raw amino-acid sequence, 152 residues long: Transcriptional regulator MraZ (152 aa).

2 consecutive SpoVT-AbrB domains span residues 5–52 and 81–124; these read AHAI…PLCE and ASEC…SETR.

It belongs to the MraZ family. Forms oligomers.

It is found in the cytoplasm. The protein resides in the nucleoid. The protein is Transcriptional regulator MraZ of Tolumonas auensis (strain DSM 9187 / NBRC 110442 / TA 4).